We begin with the raw amino-acid sequence, 439 residues long: Xaa-Pro dipeptidase (439 aa).

Residues Asp-244, Asp-255, His-335, Glu-380, and Glu-419 each contribute to the Mn(2+) site.

Belongs to the peptidase M24B family. Bacterial-type prolidase subfamily. Requires Mn(2+) as cofactor.

It catalyses the reaction Xaa-L-Pro dipeptide + H2O = an L-alpha-amino acid + L-proline. Functionally, splits dipeptides with a prolyl residue in the C-terminal position. This Shewanella sediminis (strain HAW-EB3) protein is Xaa-Pro dipeptidase.